A 198-amino-acid chain; its full sequence is Vacuolar iron transporter homolog 4 (198 aa).

The Cytoplasmic segment spans residues 1–32 (MESNNNNLNLDMEKDQETTFDYSKRAQWLRAA). A helical transmembrane segment spans residues 33–53 (VLGANDGLVSTASLMMGIGAV). The Vacuolar segment spans residues 54–60 (KQDVRIM). Residues 61–81 (LLTGFAGLVAGACSMAIGEFI) form a helical membrane-spanning segment. Residues 82 to 114 (SVYSQYDIEVAQMKRESGGETKKEKLPSPTQAA) lie on the Cytoplasmic side of the membrane. Residues 115-135 (IASALAFTLGAIVPLLAAAFV) form a helical membrane-spanning segment. Residues 136 to 141 (KEYKVR) are Vacuolar-facing. The chain crosses the membrane as a helical span at residues 142–162 (IGVIVAAVTLALVMFGWLGAV). Topologically, residues 163 to 174 (LGKAPVVKSLVR) are cytoplasmic. Residues 175-195 (VLIGGWLAMAITFGFTKLVGS) traverse the membrane as a helical segment. The Vacuolar segment spans residues 196–198 (HGL).

Belongs to the CCC1 family.

The protein resides in the vacuole membrane. The enzyme catalyses Fe(2+)(in) = Fe(2+)(out). Probable vacuolar iron transporter that may be involved in the regulation of iron distribution throughout the plant. The protein is Vacuolar iron transporter homolog 4 of Arabidopsis thaliana (Mouse-ear cress).